A 317-amino-acid polypeptide reads, in one-letter code: Transaldolase (317 aa).

The active-site Schiff-base intermediate with substrate is Lys-132.

The protein belongs to the transaldolase family. Type 1 subfamily. As to quaternary structure, homodimer.

Its subcellular location is the cytoplasm. The catalysed reaction is D-sedoheptulose 7-phosphate + D-glyceraldehyde 3-phosphate = D-erythrose 4-phosphate + beta-D-fructose 6-phosphate. It participates in carbohydrate degradation; pentose phosphate pathway; D-glyceraldehyde 3-phosphate and beta-D-fructose 6-phosphate from D-ribose 5-phosphate and D-xylulose 5-phosphate (non-oxidative stage): step 2/3. Its function is as follows. Transaldolase is important for the balance of metabolites in the pentose-phosphate pathway. The polypeptide is Transaldolase (Haemophilus influenzae (strain 86-028NP)).